The chain runs to 1480 residues: Cystic fibrosis transmembrane conductance regulator (1480 aa).

Topologically, residues 1 to 77 are cytoplasmic; the sequence is MQRSPLEKAS…KLINALRRCF (77 aa). Residues 78 to 98 form a helical membrane-spanning segment; that stretch reads FWRFMFYGILLYLGEVTKAVQ. The ABC transmembrane type-1 1 domain maps to 81–365; sequence FMFYGILLYL…WAVQTWYDSL (285 aa). Over 99 to 122 the chain is Extracellular; the sequence is PLLLGRIIASYDPDNKTERSIAIY. A helical transmembrane segment spans residues 123–146; it reads LGIGLCLLFIVRTLLLHPAIFGLH. Residues 147 to 195 lie on the Cytoplasmic side of the membrane; it reads HIGMQMRIAMFSLIYKKTLKLSSRVLDKISIGQLVSLLSNNLNKFDEGL. The helical transmembrane segment at 196–216 threads the bilayer; sequence ALAHFVWIAPLQVALLMGLIW. The Extracellular portion of the chain corresponds to 217–222; the sequence is ELLQAS. Residues 223–243 traverse the membrane as a helical segment; the sequence is VFCGLGFLIVLALFQAGLGRM. Residues 244 to 298 lie on the Cytoplasmic side of the membrane; it reads MMKYRDQRAGKINERLVITSEMIENIQSVKAYCWEEAMEKMIENLRQTELKLTRK. The chain crosses the membrane as a helical span at residues 299-319; it reads AAYVRYFNSSAFFFSGFFVVF. Residues 320-339 are Extracellular-facing; that stretch reads LSVLPYALIKGIILRKIFTT. Residues 340 to 358 traverse the membrane as a helical segment; sequence ISFCIVLRMAVTRQFPWAV. Topologically, residues 359–858 are cytoplasmic; that stretch reads QTWYDSLGAI…YLRYITLHKS (500 aa). ATP-binding positions include Trp-401, Ser-434, 458–465, and Gln-493; that span reads GSTGAGKT. Positions 423 to 646 constitute an ABC transporter 1 domain; sequence NGHDNLFFSN…RPDFSSKLMG (224 aa). Cys-524 carries S-palmitoyl cysteine lipidation. Ser-549 and Ser-660 each carry phosphoserine. Residues 654 to 831 form a disordered R region region; that stretch reads SSERRNSILT…EEINEEDLKE (178 aa). Ser-670 bears the Phosphoserine; by PKA mark. Ser-686 carries the phosphoserine modification. A Glycyl lysine isopeptide (Lys-Gly) (interchain with G-Cter in ubiquitin) cross-link involves residue Lys-688. Phosphoserine occurs at positions 700 and 712. Thr-717 bears the Phosphothreonine mark. Phosphoserine occurs at positions 737, 753, 768, 790, 795, and 813. Residues 859–879 traverse the membrane as a helical segment; the sequence is LIFVLIWCLVIFLAEVAASLV. Residues 859–1155 enclose the ABC transmembrane type-1 2 domain; the sequence is LIFVLIWCLV…AVNSSIDVDS (297 aa). Over 880 to 918 the chain is Extracellular; that stretch reads VLWLLGNTSFQDKGNSTYSRNNSYAVIITNTSSYYVFYI. N-linked (GlcNAc...) asparagine glycosylation is found at Asn-894, Asn-900, and Asn-909. A discontinuously helical membrane pass occupies residues 919–939; sequence YVGVADTLLALGFFRGLPLVH. At 940–990 the chain is on the cytoplasmic side; the sequence is TLITVSKILHHKMLHSVLQAPMSTLNTLKAGGILNRFSKDIAILDDLLPLT. Residues 991–1011 form a helical membrane-spanning segment; the sequence is IFDFIQLLLIVIGAIAVVSVL. Over 1012-1013 the chain is Extracellular; it reads QP. The helical transmembrane segment at 1014-1034 threads the bilayer; sequence YIFLATVPVIAAFILLRAYFL. Over 1035–1095 the chain is Cytoplasmic; that stretch reads QTSQQLKQLE…TANWFLYLST (61 aa). The helical transmembrane segment at 1096 to 1116 threads the bilayer; the sequence is LRWFQMRIEMIFVIFFIAVTF. Residues 1117-1130 are Extracellular-facing; that stretch reads ISILTTGEGEGTVG. Residues 1131–1151 traverse the membrane as a helical segment; that stretch reads IILTLAMNIMSTLQWAVNSSI. At 1152 to 1480 the chain is on the cytoplasmic side; that stretch reads DVDSLMRSVS…TEEEVQETRL (329 aa). The 234-residue stretch at 1210 to 1443 folds into the ABC transporter 2 domain; that stretch reads MTIKDLTAKY…KSLFQQAISH (234 aa). Residues Tyr-1219 and 1244–1251 contribute to the ATP site; that span reads GRTGSGKS. The tract at residues 1386–1480 is interaction with GORASP2; it reads RALKQAFADC…TEEEVQETRL (95 aa). Cys-1395 carries S-palmitoyl cysteine lipidation. 2 positions are modified to phosphoserine: Ser-1444 and Ser-1456. Positions 1452 to 1480 are disordered; it reads HRNSSKYKSRPQIASLKEETEEEVQETRL. Residues 1470 to 1480 are compositionally biased toward acidic residues; that stretch reads ETEEEVQETRL. Residues 1478 to 1480 carry the PDZ-binding motif; the sequence is TRL.

The protein belongs to the ABC transporter superfamily. ABCC family. CFTR transporter (TC 3.A.1.202) subfamily. In terms of assembly, monomer; does not require oligomerization for channel activity. May form oligomers in the membrane. Interacts with SLC26A3, SLC26A6 and NHERF1. Interacts with SHANK2. Interacts with MYO6. Interacts (via C-terminus) with GOPC (via PDZ domain); this promotes CFTR internalization and thereby decreases channel activity. Interacts with SLC4A7 through NHERF1. Found in a complex with MYO5B and RAB11A. Interacts with ANO1. Interacts with SLC26A8. Interacts with AHCYL1; the interaction increases CFTR activity. Interacts with CSE1L. The core-glycosylated form interacts with GORASP2 (via PDZ GRASP-type 1 domain) in respone to ER stress. Interacts with MARCHF2; the interaction leads to CFTR ubiqtuitination and degradation. Interacts with ADGRG2. N-glycosylated. Post-translationally, phosphorylated; cAMP treatment promotes phosphorylation and activates the channel. Dephosphorylation decreases the ATPase activity (in vitro). Phosphorylation at PKA sites activates the channel. Phosphorylation at PKC sites enhances the response to phosphorylation by PKA. Phosphorylated by AMPK; this inhibits channel activity. In terms of processing, ubiquitinated, leading to its degradation in the lysosome. Deubiquitination by USP10 in early endosomes enhances its endocytic recycling to the cell membrane. Ubiquitinated by RNF185 during ER stress. Ubiquitinated by MARCHF2.

It is found in the apical cell membrane. It localises to the early endosome membrane. The protein resides in the cell membrane. The protein localises to the recycling endosome membrane. Its subcellular location is the endoplasmic reticulum membrane. It is found in the nucleus. It catalyses the reaction ATP + H2O + closed Cl(-) channel = ADP + phosphate + open Cl(-) channel.. It carries out the reaction chloride(in) = chloride(out). The catalysed reaction is hydrogencarbonate(in) = hydrogencarbonate(out). The enzyme catalyses ATP + H2O = ADP + phosphate + H(+). Functionally, epithelial ion channel that plays an important role in the regulation of epithelial ion and water transport and fluid homeostasis. Mediates the transport of chloride ions across the cell membrane. Possesses an intrinsic ATPase activity and utilizes ATP to gate its channel; the passive flow of anions through the channel is gated by cycles of ATP binding and hydrolysis by the ATP-binding domains. The ion channel is also permeable to HCO(3)(-); selectivity depends on the extracellular chloride concentration. Exerts its function also by modulating the activity of other ion channels and transporters. Contributes to the regulation of the pH and the ion content of the epithelial fluid layer. Modulates the activity of the epithelial sodium channel (ENaC) complex, in part by regulating the cell surface expression of the ENaC complex. May regulate bicarbonate secretion and salvage in epithelial cells by regulating the transporter SLC4A7. Can inhibit the chloride channel activity of ANO1. Plays a role in the chloride and bicarbonate homeostasis during sperm epididymal maturation and capacitation. The sequence is that of Cystic fibrosis transmembrane conductance regulator from Plecturocebus moloch (Dusky titi monkey).